The sequence spans 138 residues: Large ribosomal subunit protein uL16 (138 aa).

Belongs to the universal ribosomal protein uL16 family. As to quaternary structure, part of the 50S ribosomal subunit.

Functionally, binds 23S rRNA and is also seen to make contacts with the A and possibly P site tRNAs. The sequence is that of Large ribosomal subunit protein uL16 from Acidiphilium cryptum (strain JF-5).